We begin with the raw amino-acid sequence, 509 residues long: Carboxysome shell carbonic anhydrase (509 aa).

Cys170 provides a ligand contact to Zn(2+). The active-site Proton acceptor is Asp172. Zn(2+) contacts are provided by His238 and Cys249.

The protein belongs to the beta-class carbonic anhydrase family. CsoSCA subfamily. As to quaternary structure, homodimer. It depends on Zn(2+) as a cofactor.

It localises to the carboxysome. It catalyses the reaction hydrogencarbonate + H(+) = CO2 + H2O. Functionally, reversible hydration of carbon dioxide. Essential for photosynthetic carbon dioxide fixation, supplies CO(2) to RuBisCO (ribulose bisphosphate carboxylase, cbbL-cbbS) in the carboxysome. There are estimated to be 29 CsoSCA oligomers per carboxysome. The sequence is that of Carboxysome shell carbonic anhydrase from Prochlorococcus marinus subsp. pastoris (strain CCMP1986 / NIES-2087 / MED4).